We begin with the raw amino-acid sequence, 1295 residues long: Phosphoribosylformylglycinamidine synthase (1295 aa).

The disordered stretch occupies residues 305 to 327 (WPGAATGSGGEIRDEGATGRGAK). ATP contacts are provided by residues 307–318 (GAATGSGGEIRD), 386–388 (TGY), and Ala678. Residues Asp679, Glu718, Asn722, and Asp884 each coordinate Mg(2+). Ser886 provides a ligand contact to ATP. The Glutamine amidotransferase type-1 domain occupies 1042 to 1295 (VAVLREQGVN…IFRNARKQLG (254 aa)). The active-site Nucleophile is Cys1135. Residues His1260 and Glu1262 contribute to the active site.

This sequence in the N-terminal section; belongs to the FGAMS family. As to quaternary structure, monomer.

It localises to the cytoplasm. It carries out the reaction N(2)-formyl-N(1)-(5-phospho-beta-D-ribosyl)glycinamide + L-glutamine + ATP + H2O = 2-formamido-N(1)-(5-O-phospho-beta-D-ribosyl)acetamidine + L-glutamate + ADP + phosphate + H(+). It participates in purine metabolism; IMP biosynthesis via de novo pathway; 5-amino-1-(5-phospho-D-ribosyl)imidazole from N(2)-formyl-N(1)-(5-phospho-D-ribosyl)glycinamide: step 1/2. Its function is as follows. Phosphoribosylformylglycinamidine synthase involved in the purines biosynthetic pathway. Catalyzes the ATP-dependent conversion of formylglycinamide ribonucleotide (FGAR) and glutamine to yield formylglycinamidine ribonucleotide (FGAM) and glutamate. In Salmonella typhimurium (strain LT2 / SGSC1412 / ATCC 700720), this protein is Phosphoribosylformylglycinamidine synthase.